The primary structure comprises 83 residues: UPF0512 protein W (83 aa).

Belongs to the UPF0512 family.

The protein is UPF0512 protein W of Dictyostelium discoideum (Social amoeba).